A 677-amino-acid polypeptide reads, in one-letter code: Methionine--tRNA ligase (677 aa).

Residues 15 to 25 (PYANGSIHLGH) carry the 'HIGH' region motif. 4 residues coordinate Zn(2+): Cys146, Cys149, Cys159, and Cys162. The short motif at 333–337 (KMSKS) is the 'KMSKS' region element. Lys336 lines the ATP pocket. One can recognise a tRNA-binding domain in the interval 576–677 (DFAKIDLRVA…EGAKPGMRVK (102 aa)).

The protein belongs to the class-I aminoacyl-tRNA synthetase family. MetG type 1 subfamily. As to quaternary structure, homodimer. Zn(2+) is required as a cofactor.

The protein resides in the cytoplasm. It carries out the reaction tRNA(Met) + L-methionine + ATP = L-methionyl-tRNA(Met) + AMP + diphosphate. Functionally, is required not only for elongation of protein synthesis but also for the initiation of all mRNA translation through initiator tRNA(fMet) aminoacylation. The sequence is that of Methionine--tRNA ligase from Aeromonas hydrophila subsp. hydrophila (strain ATCC 7966 / DSM 30187 / BCRC 13018 / CCUG 14551 / JCM 1027 / KCTC 2358 / NCIMB 9240 / NCTC 8049).